A 410-amino-acid chain; its full sequence is Probable peptidoglycan glycosyltransferase FtsW (410 aa).

Residues 1-37 (MRSEERQLNLFGTSVNWSWPNLFKEREAPGMQLYDRA) lie on the Cytoplasmic side of the membrane. Residues 38–58 (LLFAVLSLICFGFVMVMSASM) form a helical membrane-spanning segment. At 59–69 (PEAQSLTGNPY) the chain is on the periplasmic side. The helical transmembrane segment at 70 to 90 (HFAIRHFAYLVGCAVIAAVVL) threads the bilayer. At 91–99 (RIEMSRWQQ) the chain is on the cytoplasmic side. Residues 100–120 (FSPLLLLIVGIMLVAVLLVGT) form a helical membrane-spanning segment. At 121-131 (SVNGATRWLSV) the chain is on the periplasmic side. A helical transmembrane segment spans residues 132-154 (GPIRIQVAELAKFAFTIYMAGYL). Over 155 to 163 (VRRHQEIRE) the chain is Cytoplasmic. The helical transmembrane segment at 164 to 184 (NAKGFYKPIAVFAVYAFLILM) threads the bilayer. Residues 185-186 (QP) are Periplasmic-facing. Residues 187 to 207 (DLGTVVVLFVGTVGLLFLAGA) form a helical membrane-spanning segment. A topological domain (cytoplasmic) is located at residue Arg-208. The helical transmembrane segment at 209 to 229 (LLDFFALILTGVMAFVALVLL) threads the bilayer. The Periplasmic portion of the chain corresponds to 230-291 (EPYRMRRVTS…PEAHTDFIFA (62 aa)). A helical transmembrane segment spans residues 292–312 (VIGEELGFIGIVVVLSVLLFV). The Cytoplasmic segment spans residues 313–336 (ALRAIKLGNLCIEIDKPFEGYLAY). Residues 337–357 (AIGIWFCFQTVVNVGASIGML) form a helical membrane-spanning segment. The Periplasmic segment spans residues 358-364 (PTKGLTL). A helical transmembrane segment spans residues 365–385 (PFISYGGSSLWVMTAAAMILI). Residues 386–410 (RIDHERRLSSIQAVQGKKVNDNREY) are Cytoplasmic-facing.

Belongs to the SEDS family. FtsW subfamily.

It is found in the cell inner membrane. The enzyme catalyses [GlcNAc-(1-&gt;4)-Mur2Ac(oyl-L-Ala-gamma-D-Glu-L-Lys-D-Ala-D-Ala)](n)-di-trans,octa-cis-undecaprenyl diphosphate + beta-D-GlcNAc-(1-&gt;4)-Mur2Ac(oyl-L-Ala-gamma-D-Glu-L-Lys-D-Ala-D-Ala)-di-trans,octa-cis-undecaprenyl diphosphate = [GlcNAc-(1-&gt;4)-Mur2Ac(oyl-L-Ala-gamma-D-Glu-L-Lys-D-Ala-D-Ala)](n+1)-di-trans,octa-cis-undecaprenyl diphosphate + di-trans,octa-cis-undecaprenyl diphosphate + H(+). Its pathway is cell wall biogenesis; peptidoglycan biosynthesis. In terms of biological role, peptidoglycan polymerase that is essential for cell division. In Shewanella sediminis (strain HAW-EB3), this protein is Probable peptidoglycan glycosyltransferase FtsW.